A 554-amino-acid chain; its full sequence is Arginine--tRNA ligase (554 aa).

The 'HIGH' region signature appears at 130-140; that stretch reads ANPTGDLHIGH.

It belongs to the class-I aminoacyl-tRNA synthetase family. In terms of assembly, monomer.

It is found in the cytoplasm. The enzyme catalyses tRNA(Arg) + L-arginine + ATP = L-arginyl-tRNA(Arg) + AMP + diphosphate. This chain is Arginine--tRNA ligase, found in Staphylococcus carnosus (strain TM300).